Reading from the N-terminus, the 250-residue chain is Ribonuclease PH (250 aa).

Phosphate is bound by residues Arg-86 and 124–126 (GTR).

This sequence belongs to the RNase PH family. In terms of assembly, homohexameric ring arranged as a trimer of dimers.

It carries out the reaction tRNA(n+1) + phosphate = tRNA(n) + a ribonucleoside 5'-diphosphate. Functionally, phosphorolytic 3'-5' exoribonuclease that plays an important role in tRNA 3'-end maturation. Removes nucleotide residues following the 3'-CCA terminus of tRNAs; can also add nucleotides to the ends of RNA molecules by using nucleoside diphosphates as substrates, but this may not be physiologically important. Probably plays a role in initiation of 16S rRNA degradation (leading to ribosome degradation) during starvation. The sequence is that of Ribonuclease PH from Shouchella clausii (strain KSM-K16) (Alkalihalobacillus clausii).